The following is a 650-amino-acid chain: Tudor domain-containing protein 3 (650 aa).

The segment at 147–169 (TKTFGGGGNAGSNLNPGAGGSRN) is disordered. The region spanning 192–232 (LVDEKALRHITEMGFCKDAARQALMDHSNNVEAALNFLLTG) is the UBA domain. 3 disordered regions span residues 233 to 271 (SKPK…APST), 286 to 406 (EDNK…SCNN), and 427 to 447 (HQNS…DQRY). 2 stretches are compositionally biased toward basic and acidic residues: residues 320–337 (TRND…RFQK) and 366–388 (HWME…KDFS). Residues 390–406 (PPSNHQNEGSYRKSCNN) are compositionally biased toward polar residues. In terms of domain architecture, Tudor spans 554–614 (SWRSGDECLA…RPIQAEAWEE (61 aa)). The tract at residues 616-650 (GEFGDSLDFRRGGDGQPRRSTRPTQQFYQPPRARN) is disordered. The segment covering 622 to 632 (LDFRRGGDGQP) has biased composition (basic and acidic residues).

As to quaternary structure, component of mRNA stress granules.

It is found in the cytoplasm. The protein localises to the nucleus. Functionally, scaffolding protein that specifically recognizes and binds dimethylarginine-containing proteins. Plays a role in the regulation of translation of target mRNAs by binding Arg/Gly-rich motifs (GAR) in dimethylarginine-containing proteins. In nucleus, acts as a coactivator: recognizes and binds asymmetric dimethylation on the core histone tails associated with transcriptional activation (H3R17me2a and H4R3me2a) and recruits proteins at these arginine-methylated loci. In cytoplasm, acts as an antiviral factor that participates in the assembly of stress granules together with G3BP1. This chain is Tudor domain-containing protein 3 (tdrd3), found in Xenopus laevis (African clawed frog).